The chain runs to 287 residues: Aquaporin PIP1-1 (287 aa).

2 consecutive transmembrane segments (helical) span residues 57–77 (IAEFVATFLFLYISILTVMGV) and 92–114 (IAWSFGGMILALVYCTAGISGHI). The NPA 1 motif lies at 115–117 (NPA). Transmembrane regions (helical) follow at residues 134 to 154 (VFYIIMQCLGAICGRGVVKGF), 176 to 196 (GDGLGAEIVGTFILVYTVFSA), and 210 to 230 (ILAPLPIGFAVFLVHLATMGI). The short motif at 236-238 (NPA) is the NPA 2 element. Residues 258–278 (IFWVGPFIGAALAAIYHQVII) traverse the membrane as a helical segment.

This sequence belongs to the MIP/aquaporin (TC 1.A.8) family. PIP (TC 1.A.8.11) subfamily. As to quaternary structure, may interact with PIP1-2 to form heteromers. In terms of tissue distribution, highly expressed in roots, shoots and developing tassels, and at lower levels in leaves.

Its subcellular location is the cell membrane. In terms of biological role, water channel required to facilitate the transport of water across cell membrane. Active as heteromers with PIP1-2, but not as homomers. This is Aquaporin PIP1-1 (PIP1-1) from Zea mays (Maize).